Consider the following 334-residue polypeptide: GTPase Obg (334 aa).

One can recognise an Obg domain in the interval 1-159; that stretch reads MRFVDEVVIK…KEVRLELNLL (159 aa). The 172-residue stretch at 160 to 331 folds into the OBG-type G domain; that stretch reads ADVALLGLPN…LAKKLNEFLQ (172 aa). GTP contacts are provided by residues 166-173, 191-195, 212-215, 282-285, and 312-314; these read GLPNAGKS, FTTMY, DIPG, NKID, and SAA. Residues S173 and T193 each coordinate Mg(2+).

The protein belongs to the TRAFAC class OBG-HflX-like GTPase superfamily. OBG GTPase family. As to quaternary structure, monomer. Mg(2+) serves as cofactor.

The protein localises to the cytoplasm. An essential GTPase which binds GTP, GDP and possibly (p)ppGpp with moderate affinity, with high nucleotide exchange rates and a fairly low GTP hydrolysis rate. Plays a role in control of the cell cycle, stress response, ribosome biogenesis and in those bacteria that undergo differentiation, in morphogenesis control. This chain is GTPase Obg, found in Francisella tularensis subsp. mediasiatica (strain FSC147).